The sequence spans 48 residues: Large ribosomal subunit protein bL32 (48 aa).

The disordered stretch occupies residues 1–20 (MAVPDRRVSKTRAAKRRTHY). The segment covering 9-20 (SKTRAAKRRTHY) has biased composition (basic residues).

Belongs to the bacterial ribosomal protein bL32 family.

In Helicobacter acinonychis (strain Sheeba), this protein is Large ribosomal subunit protein bL32.